The chain runs to 104 residues: Naphthalene 1,2-dioxygenase system, ferredoxin component (104 aa).

A Rieske domain is found at 6–101; it reads IDAVALYEIP…VKIEGQRVMI (96 aa). Positions 45, 47, 64, and 67 each coordinate [2Fe-2S] cluster.

Belongs to the bacterial ring-hydroxylating dioxygenase ferredoxin component family. As to quaternary structure, the naphthalene dioxygenase (NDO) multicomponent enzyme system is composed of an electron transfer component and a dioxygenase component (iron sulfur protein (ISP)). The electron transfer component is composed of a ferredoxin reductase (NdoR) and a ferredoxin (NdoA), and the dioxygenase component is formed of a heterohexamer (trimer of heterodimers) of three large alpha subunits (NdoB) and three small beta subunits (NdoC). Requires [2Fe-2S] cluster as cofactor.

It participates in aromatic compound metabolism; naphthalene degradation. Its function is as follows. Component of the naphthalene dioxygenase (NDO) multicomponent enzyme system which catalyzes the incorporation of both atoms of molecular oxygen into naphthalene to form cis-(1R,2S)-dihydroxy-1,2-dihydronaphthalene. Functions as an intermediate electron transfer protein via a specific interaction with iron sulfur protein components (ISP) (NdoB and NdoC). This chain is Naphthalene 1,2-dioxygenase system, ferredoxin component, found in Pseudomonas aeruginosa.